We begin with the raw amino-acid sequence, 159 residues long: Large ribosomal subunit protein bL35c (159 aa).

The N-terminal 86 residues, 1–86, are a transit peptide targeting the chloroplast; sequence MAMASATATL…TSSPSFTVFA (86 aa).

As to quaternary structure, component of the chloroplast large ribosomal subunit (LSU). Mature 70S chloroplast ribosomes of higher plants consist of a small (30S) and a large (50S) subunit. The 30S small subunit contains 1 molecule of ribosomal RNA (16S rRNA) and 24 different proteins. The 50S large subunit contains 3 rRNA molecules (23S, 5S and 4.5S rRNA) and 33 different proteins.

It is found in the plastid. Its subcellular location is the chloroplast. In terms of biological role, component of the chloroplast ribosome (chloro-ribosome), a dedicated translation machinery responsible for the synthesis of chloroplast genome-encoded proteins, including proteins of the transcription and translation machinery and components of the photosynthetic apparatus. The polypeptide is Large ribosomal subunit protein bL35c (RPL35) (Spinacia oleracea (Spinach)).